The following is a 241-amino-acid chain: Proteasome subunit alpha type-5 (241 aa).

Met-1 carries the post-translational modification N-acetylmethionine. Ser-16 is modified (phosphoserine). Thr-55 bears the Phosphothreonine mark. Phosphoserine occurs at positions 56 and 63. Ser-198 carries an O-linked (GlcNAc) serine glycan.

It belongs to the peptidase T1A family. The 26S proteasome consists of a 20S proteasome core and two 19S regulatory subunits. The 20S proteasome core is a barrel-shaped complex made of 28 subunits that are arranged in four stacked rings. The two outer rings are each formed by seven alpha subunits, and the two inner rings are formed by seven beta subunits. The proteolytic activity is exerted by three beta-subunits PSMB5, PSMB6 and PSMB7. PSMA5 interacts directly with the PSMG1-PSMG2 heterodimer which promotes 20S proteasome assembly.

The protein resides in the cytoplasm. It localises to the nucleus. Component of the 20S core proteasome complex involved in the proteolytic degradation of most intracellular proteins. This complex plays numerous essential roles within the cell by associating with different regulatory particles. Associated with two 19S regulatory particles, forms the 26S proteasome and thus participates in the ATP-dependent degradation of ubiquitinated proteins. The 26S proteasome plays a key role in the maintenance of protein homeostasis by removing misfolded or damaged proteins that could impair cellular functions, and by removing proteins whose functions are no longer required. Associated with the PA200 or PA28, the 20S proteasome mediates ubiquitin-independent protein degradation. This type of proteolysis is required in several pathways including spermatogenesis (20S-PA200 complex) or generation of a subset of MHC class I-presented antigenic peptides (20S-PA28 complex). In Bos taurus (Bovine), this protein is Proteasome subunit alpha type-5 (PSMA5).